The chain runs to 330 residues: Mas-related G-protein coupled receptor member X2 (330 aa).

Over 1 to 33 (MDPTTPAWGNESTTMNGNDQALPLLCGKETLIP) the chain is Extracellular. A helical transmembrane segment spans residues 34–54 (VFLILFIALVGLVGNGFVLWL). The Cytoplasmic segment spans residues 55 to 63 (LGFCMRRNA). The chain crosses the membrane as a helical span at residues 64–84 (FSVYVLSLAGADFLFLCFQLI). The Extracellular segment spans residues 85-96 (NCLVYLSNFFCS). Residues 97–117 (ISIDFPSFFTTVMTCAYLAGL) form a helical membrane-spanning segment. Residues 118–144 (SMLSTISTERCLSVLWPIWYRCRRPRH) lie on the Cytoplasmic side of the membrane. A helical transmembrane segment spans residues 145–165 (LSAVVCVLLWALSLLLSILEG). The Extracellular segment spans residues 166 to 184 (KFCGFFFSDGDSGWCQTFD). Residues 185–205 (FITAAWLIFLFMVLCGSSLAL) form a helical membrane-spanning segment. Residues 206–228 (LVRILCGSRGLPLTRLYLTILLT) lie on the Cytoplasmic side of the membrane. The helical transmembrane segment at 229–249 (VLVFLLCGLPFGIQWFLILWI) threads the bilayer. The Extracellular portion of the chain corresponds to 250 to 264 (WENSDVLFCHIHPVS). Residues 265-285 (VVLSSLNSSANPIIYFFVGTF) form a helical membrane-spanning segment. Topologically, residues 286-330 (RKQWRLQQPILKLALQRALQDTAEVDHSEGCFRQGTPEMSRSSLV) are cytoplasmic.

It belongs to the G-protein coupled receptor 1 family. Mas subfamily.

It is found in the cell membrane. In terms of biological role, mast cell-specific receptor for basic secretagogues, i.e. cationic amphiphilic drugs, as well as endo- or exogenous peptides, consisting of a basic head group and a hydrophobic core. Recognizes and binds small molecules containing a cyclized tetrahydroisoquinoline (THIQ), such as non-steroidal neuromuscular blocking drugs (NMBDs), including tubocurarine and atracurium. In response to these compounds, mediates pseudo-allergic reactions characterized by histamine release, inflammation and airway contraction. The sequence is that of Mas-related G-protein coupled receptor member X2 (MRGPRX2) from Pongo pygmaeus (Bornean orangutan).